We begin with the raw amino-acid sequence, 99 residues long: RNA-binding protein Hfq (99 aa).

Residues 9–68 (DPFLNALRRERVPVSIYLVNGIKLQGQIESFDQFVILLKNTVSQMVYKHAISTVVPSRPV) form the Sm domain. The segment at 64-99 (PSRPVSHHSNNPGGGSNYHGNNTAASQQSQEADDAE) is disordered.

Belongs to the Hfq family. In terms of assembly, homohexamer.

In terms of biological role, RNA chaperone that binds small regulatory RNA (sRNAs) and mRNAs to facilitate mRNA translational regulation in response to envelope stress, environmental stress and changes in metabolite concentrations. Also binds with high specificity to tRNAs. The chain is RNA-binding protein Hfq from Pectobacterium carotovorum subsp. carotovorum (strain PC1).